The chain runs to 809 residues: Lon protease (809 aa).

A Lon N-terminal domain is found at Leu8–Ile203. Gly354–Thr361 provides a ligand contact to ATP. The Lon proteolytic domain occupies Lys629 to Val809. Active-site residues include Ser716 and Lys759.

It belongs to the peptidase S16 family. As to quaternary structure, homohexamer. Organized in a ring with a central cavity.

It localises to the cytoplasm. The enzyme catalyses Hydrolysis of proteins in presence of ATP.. Its function is as follows. ATP-dependent serine protease that mediates the selective degradation of mutant and abnormal proteins as well as certain short-lived regulatory proteins. Required for cellular homeostasis and for survival from DNA damage and developmental changes induced by stress. Degrades polypeptides processively to yield small peptide fragments that are 5 to 10 amino acids long. Binds to DNA in a double-stranded, site-specific manner. This Lachnoclostridium phytofermentans (strain ATCC 700394 / DSM 18823 / ISDg) (Clostridium phytofermentans) protein is Lon protease.